The following is a 136-amino-acid chain: Ribonuclease YqgF (136 aa).

The protein belongs to the YqgF nuclease family. As to quaternary structure, monomer; also forms low amounts of dimers. Requires Mn(2+) as cofactor.

Its subcellular location is the cytoplasm. Has robust sequence-specific RNase activity, acting as a 5'-3' exo/endonuclease on ssRNA substrates with minimally 3 consecutive adenine bases. Has no detectable nuclease activity on dsRNA, dsDNA or Holliday junction DNA. The polypeptide is Ribonuclease YqgF (Deinococcus radiodurans (strain ATCC 13939 / DSM 20539 / JCM 16871 / CCUG 27074 / LMG 4051 / NBRC 15346 / NCIMB 9279 / VKM B-1422 / R1)).